The following is a 294-amino-acid chain: Factor associated with metabolism and energy (294 aa).

Residues 1 to 12 (MGLGHSKAHPRV) are compositionally biased toward basic residues. Disordered stretches follow at residues 1 to 28 (MGLG…TPST) and 255 to 279 (FWDS…LVRT). A lipid anchor (N-myristoyl glycine) is attached at glycine 2. Over residues 17 to 28 (PLQSQETETPST) the composition is skewed to polar residues. Positions 268–279 (KDERRPQALVRT) are enriched in basic and acidic residues.

Expressed in proximal tubules of the kidney.

The protein localises to the cell membrane. It localises to the cytoplasmic vesicle. Functionally, may be involved in tuning the metabolism, energy expenditure, and excretion processes. The sequence is that of Factor associated with metabolism and energy from Mus musculus (Mouse).